A 43-amino-acid polypeptide reads, in one-letter code: Protein PsbN (43 aa).

The helical transmembrane segment at valine 7 to glutamine 29 threads the bilayer.

It belongs to the PsbN family.

The protein resides in the plastid. It localises to the chloroplast thylakoid membrane. Functionally, may play a role in photosystem I and II biogenesis. This Draba nemorosa (Woodland whitlowgrass) protein is Protein PsbN.